The chain runs to 192 residues: dTTP/UTP pyrophosphatase (192 aa).

Residue Asp72 is the Proton acceptor of the active site.

This sequence belongs to the Maf family. YhdE subfamily. The cofactor is a divalent metal cation.

The protein resides in the cytoplasm. It carries out the reaction dTTP + H2O = dTMP + diphosphate + H(+). The catalysed reaction is UTP + H2O = UMP + diphosphate + H(+). Functionally, nucleoside triphosphate pyrophosphatase that hydrolyzes dTTP and UTP. May have a dual role in cell division arrest and in preventing the incorporation of modified nucleotides into cellular nucleic acids. The protein is dTTP/UTP pyrophosphatase of Geobacter metallireducens (strain ATCC 53774 / DSM 7210 / GS-15).